A 303-amino-acid chain; its full sequence is MVKIENAHEGVIHHAALNYYGTRLATCSSDKTVKIFEINDVNNSSSLLETLVGHEGPVWYADWCHPSLGENLLATCGYDGKVLIWKESGHGGKMQIIGKHAVHSASVNCVKWAPHEYGLILLCGSADGKISVVELKDGQIASTKILDNAHKFGVNSISWAPLMKTDSSDDGDETTAVKQFISGGNDNLVKIWKFDDDQETYVVADTLEGHKDAVTAVDWSPTTLLQSYVASVSNDKQCLVWTQDHSSKKNDWKKISVNEGKFEQKLGSVSWSLSGNLLAVSDDDKNVTIWKESGDGKWEEVVN.

WD repeat units lie at residues 7–46, 53–95, 102–143, 149–202, 209–251, and 261–300; these read AHEGVIHHAALNYYGTRLATCSSDKTVKIFEINDVNNSSS, GHEG…GKMQ, VHSA…IAST, AHKF…ETYV, GHKD…KKND, and KFEQKLGSVSWSLSGNLLAVSDDDKNVTIWKESGDGKWEE.

It belongs to the WD repeat SEC13 family. In terms of assembly, the COPII coat is composed of at least 5 proteins: the SEC23/24 complex, the SEC13/31 complex, and the protein SAR1. Component of the nuclear pore complex (NPC). NPC constitutes the exclusive means of nucleocytoplasmic transport. NPCs allow the passive diffusion of ions and small molecules and the active, nuclear transport receptor-mediated bidirectional transport of macromolecules such as proteins, RNAs, ribonucleoparticles (RNPs), and ribosomal subunits across the nuclear envelope. Due to its 8-fold rotational symmetry, all subunits are present with 8 copies or multiples thereof.

It localises to the cytoplasmic vesicle. It is found in the COPII-coated vesicle membrane. The protein localises to the endoplasmic reticulum membrane. The protein resides in the nucleus. Its subcellular location is the nuclear pore complex. Functionally, component of the coat protein complex II (COPII) which promotes the formation of transport vesicles from the endoplasmic reticulum (ER). The coat has two main functions, the physical deformation of the endoplasmic reticulum membrane into vesicles and the selection of cargo molecules. It also functions as a component of the nuclear pore complex (NPC). NPC components, collectively referred to as nucleoporins (NUPs), can play the role of both NPC structural components and of docking or interaction partners for transiently associated nuclear transport factors. SEC13 is required for efficient mRNA export from the nucleus to the cytoplasm and for correct nuclear pore biogenesis and distribution. The sequence is that of Protein transport protein SEC13-2 (SEC132) from Candida glabrata (strain ATCC 2001 / BCRC 20586 / JCM 3761 / NBRC 0622 / NRRL Y-65 / CBS 138) (Yeast).